The primary structure comprises 119 residues: Protein yippee-like 1 (119 aa).

In terms of domain architecture, Yippee spans 19–116 (RTYSCIHCRA…IELAHMIKDN (98 aa)). Zn(2+) is bound by residues Cys-23, Cys-26, Cys-79, and Cys-82. The Nuclear localization signal motif lies at 99–104 (KYKEGK).

It belongs to the yippee family.

The protein localises to the nucleus. In terms of biological role, may play a role in epithelioid conversion of fibroblasts. The protein is Protein yippee-like 1 (YPEL1) of Chlorocebus aethiops (Green monkey).